A 459-amino-acid polypeptide reads, in one-letter code: Putrescine aminotransferase (459 aa).

Pyridoxal 5'-phosphate-binding positions include 150–151 (GT) and Gln-274. An N6-(pyridoxal phosphate)lysine modification is found at Lys-300. Pyridoxal 5'-phosphate is bound at residue Thr-332.

Belongs to the class-III pyridoxal-phosphate-dependent aminotransferase family. Putrescine aminotransferase subfamily. Pyridoxal 5'-phosphate serves as cofactor.

It carries out the reaction an alkane-alpha,omega-diamine + 2-oxoglutarate = an omega-aminoaldehyde + L-glutamate. The enzyme catalyses putrescine + 2-oxoglutarate = 1-pyrroline + L-glutamate + H2O. The catalysed reaction is cadaverine + 2-oxoglutarate = 5-aminopentanal + L-glutamate. Its pathway is amine and polyamine degradation; putrescine degradation; 4-aminobutanal from putrescine (transaminase route): step 1/1. In terms of biological role, catalyzes the aminotransferase reaction from putrescine to 2-oxoglutarate, leading to glutamate and 4-aminobutanal, which spontaneously cyclizes to form 1-pyrroline. This is the first step in one of two pathways for putrescine degradation, where putrescine is converted into 4-aminobutanoate (gamma-aminobutyrate or GABA) via 4-aminobutanal. Also functions as a cadaverine transaminase in a a L-lysine degradation pathway to succinate that proceeds via cadaverine, glutarate and L-2-hydroxyglutarate. This Escherichia coli O81 (strain ED1a) protein is Putrescine aminotransferase.